A 382-amino-acid polypeptide reads, in one-letter code: Protein RecA (382 aa).

The interval 1–20 (MPADVKAAQSSAGDSRPGER) is disordered. 79 to 86 (GPESSGKT) lines the ATP pocket. Residues 360–369 (SAAAKPSAKT) show a composition bias toward low complexity. The tract at residues 360–382 (SAAAKPSAKTADTDKKLVADGAA) is disordered. The segment covering 370–382 (ADTDKKLVADGAA) has biased composition (basic and acidic residues).

Belongs to the RecA family.

It is found in the cytoplasm. Functionally, can catalyze the hydrolysis of ATP in the presence of single-stranded DNA, the ATP-dependent uptake of single-stranded DNA by duplex DNA, and the ATP-dependent hybridization of homologous single-stranded DNAs. It interacts with LexA causing its activation and leading to its autocatalytic cleavage. The sequence is that of Protein RecA from Synechococcus sp. (strain CC9311).